Here is a 102-residue protein sequence, read N- to C-terminus: Small ribosomal subunit protein uS10 (102 aa).

This sequence belongs to the universal ribosomal protein uS10 family. Part of the 30S ribosomal subunit.

Involved in the binding of tRNA to the ribosomes. In Thermobifida fusca (strain YX), this protein is Small ribosomal subunit protein uS10.